Consider the following 273-residue polypeptide: Glutamate transport system permease protein GluD (273 aa).

The next 5 helical transmembrane spans lie at 26–46 (ILPGLWGTLKSAVFSVILALV), 64–84 (WFCAVIIETFRAIPVLILMIF), 100–120 (LAFAAVVFGLTMYNGSVIAEI), 150–170 (ILLPQAVAAMLPALISQMVIA), and 200–220 (LAALFVVALIMIVLNFSLTAL). One can recognise an ABC transmembrane type-1 domain in the interval 30-221 (LWGTLKSAVF…VLNFSLTALA (192 aa)). A disordered region spans residues 242–273 (PEQPDQGLETKDNVNVDWQDPDYKDLKTPGVQ). The segment covering 262-273 (PDYKDLKTPGVQ) has biased composition (basic and acidic residues).

Belongs to the binding-protein-dependent transport system permease family. HisMQ subfamily. As to quaternary structure, the complex is composed of two ATP-binding proteins (GluA), two transmembrane proteins (GluC and GluD) and a solute-binding protein (GluB).

It is found in the cell membrane. In terms of biological role, part of the ABC transporter complex GluABCD involved in glutamate uptake. Probably responsible for the translocation of the substrate across the membrane. This Corynebacterium glutamicum (strain ATCC 13032 / DSM 20300 / JCM 1318 / BCRC 11384 / CCUG 27702 / LMG 3730 / NBRC 12168 / NCIMB 10025 / NRRL B-2784 / 534) protein is Glutamate transport system permease protein GluD.